A 561-amino-acid chain; its full sequence is Excitatory amino acid transporter 4 (561 aa).

Residues 1-52 (MSSHGNSLFLRESGAGGGCLQGLQDSLQQRALRTRLRLQTMTREHVRRFLRR) are Cytoplasmic-facing. Serine 2 is subject to Phosphoserine. 3 helical membrane-spanning segments follow: residues 53-73 (NAFI…AFAL), 96-116 (MLQM…MASL), and 130-150 (VYYM…VTII). N-linked (GlcNAc...) asparagine glycosylation is found at asparagine 213, asparagine 229, and asparagine 236. 3 helical membrane passes run 259-282 (SANG…IGGM), 292-319 (FFDS…LFLI), and 341-362 (LTVI…YFLV). The segment at residues 368–398 (FPFIGGMLQALITAMGTSSSSATLPITFRCL) is an intramembrane region (discontinuously helical). 385–387 (SSS) lines the L-aspartate pocket. The helical transmembrane segment at 408–434 (ITRFVLPVGATVNMDGTALYEALAAIF) threads the bilayer. Residues glycine 416, threonine 418, and asparagine 420 each contribute to the Na(+) site. Residues threonine 424, 465–469 (IPQAG), aspartate 498, and asparagine 505 contribute to the L-aspartate site. Positions 448-481 (ITTISITATAASVGAAGIPQAGLVTMVIVLTSVG) form an intramembrane region, discontinuously helical. The helical transmembrane segment at 495–516 (WFLDRLRTMTNVLGDSIGAAVI) threads the bilayer. Residues asparagine 505 and aspartate 509 each contribute to the Na(+) site.

The protein belongs to the dicarboxylate/amino acid:cation symporter (DAACS) (TC 2.A.23) family. SLC1A6 subfamily. Homotrimer. As to expression, brain specific.

The protein resides in the cell membrane. It catalyses the reaction K(+)(in) + L-glutamate(out) + 3 Na(+)(out) + H(+)(out) = K(+)(out) + L-glutamate(in) + 3 Na(+)(in) + H(+)(in). The catalysed reaction is K(+)(in) + L-aspartate(out) + 3 Na(+)(out) + H(+)(out) = K(+)(out) + L-aspartate(in) + 3 Na(+)(in) + H(+)(in). It carries out the reaction D-aspartate(out) + K(+)(in) + 3 Na(+)(out) + H(+)(out) = D-aspartate(in) + K(+)(out) + 3 Na(+)(in) + H(+)(in). Sodium-dependent, high-affinity amino acid transporter that mediates the uptake of L-glutamate and also L-aspartate and D-aspartate. Functions as a symporter that transports one amino acid molecule together with two or three Na(+) ions and one proton, in parallel with the counter-transport of one K(+) ion. Mediates Cl(-) flux that is not coupled to amino acid transport; this avoids the accumulation of negative charges due to aspartate and Na(+) symport. Plays a redundant role in the rapid removal of released glutamate from the synaptic cleft, which is essential for terminating the postsynaptic action of glutamate. This Mus musculus (Mouse) protein is Excitatory amino acid transporter 4 (Slc1a6).